We begin with the raw amino-acid sequence, 261 residues long: uncharacterized protein (261 aa).

22–46 contacts NADP(+); that stretch reads IVTGGNSGLGQAFAMALAKAGANIF. Position 153 (S153) interacts with substrate. Y166 serves as the catalytic Proton acceptor.

This sequence belongs to the short-chain dehydrogenases/reductases (SDR) family.

This is an uncharacterized protein from Escherichia coli (strain K12).